The following is a 308-amino-acid chain: Inactive C-alpha-formylglycine-generating enzyme 2 (308 aa).

An N-terminal signal peptide occupies residues 1–33 (MRSEFWFPSMGSLLPPVLLLWLLSCPRLQLGHA). Cys-163 and Cys-297 form a disulfide bridge. An N-linked (GlcNAc...) asparagine glycan is attached at Asn-198. Residues Asn-201, Leu-202, Asp-215, Phe-217, Asp-236, Gly-239, Val-241, and Glu-243 each contribute to the Ca(2+) site. Positions 281-291 (RMGNTPDSASD) are enriched in polar residues. Residues 281 to 308 (RMGNTPDSASDNLGFRCASSAGRPKEDL) are disordered. The short motif at 305-308 (KEDL) is the Non-canonical ER retention motif element.

This sequence belongs to the sulfatase-modifying factor family. As to quaternary structure, homodimer and heterodimer with SUMF1.

The protein resides in the endoplasmic reticulum lumen. Its function is as follows. Lacks formylglycine generating activity and is unable to convert newly synthesized inactive sulfatases to their active form. Inhibits the activation of sulfatases by SUMF1. The sequence is that of Inactive C-alpha-formylglycine-generating enzyme 2 from Mus musculus (Mouse).